The chain runs to 148 residues: Augurin (148 aa).

A signal peptide spans 1–31 (MSTSSARPAVLALAGLALLLLLCLGPDGISG). 2 consecutive propeptides follow at residues 32 to 70 (NKLKKMLQKREGPVPSKTNVAVAENTAKEFLGGLKRAKR) and 133 to 148 (SRESFRHGASVNYNDY).

The protein belongs to the augurin family. In terms of tissue distribution, expressed in the intermediate lobe of pituitary, glomerular layer of adrenal cortex, choroid plexus and atrioventricular node of the heart. Expressed in the brain with high expression in the choroid plexus and the epithelial lining of the central canal and expression in the gray matter of the spinal cord (at protein level).

The protein resides in the secreted. The protein localises to the cytoplasm. Its subcellular location is the apical cell membrane. Probable hormone that may attenuate cell proliferation and induce senescence of oligodendrocyte and neural precursor cells in the central nervous system. ECRG4-induced senescence is characterized by G1 arrest, RB1 dephosphorylation and accelerated CCND1 and CCND3 proteasomal degradation. The polypeptide is Augurin (Mus musculus (Mouse)).